A 221-amino-acid polypeptide reads, in one-letter code: NADH-ubiquinone oxidoreductase chain 6 (221 aa).

A run of 5 helical transmembrane segments spans residues 18–38, 44–64, 74–94, 107–127, and 195–215; these read FVEYILDIFSIMAFLTGIYVI, IVSVLFLILLFGGISSYLNII, IIVYIGAVSILFLFILMLINI, IPLTIFIGIIFSNFLFPMLPY, and IWLIIASFILLLAMVGSIVIT.

The protein belongs to the complex I subunit 6 family.

The protein resides in the mitochondrion membrane. It carries out the reaction a ubiquinone + NADH + 5 H(+)(in) = a ubiquinol + NAD(+) + 4 H(+)(out). Core subunit of the mitochondrial membrane respiratory chain NADH dehydrogenase (Complex I) that is believed to belong to the minimal assembly required for catalysis. Complex I functions in the transfer of electrons from NADH to the respiratory chain. The immediate electron acceptor for the enzyme is believed to be ubiquinone. The polypeptide is NADH-ubiquinone oxidoreductase chain 6 (ND6) (Podospora anserina (strain S / ATCC MYA-4624 / DSM 980 / FGSC 10383) (Pleurage anserina)).